The chain runs to 233 residues: 7-cyano-7-deazaguanine synthase (233 aa).

8-18 lines the ATP pocket; it reads LSGGLDSTTCM. Positions 186, 194, 197, and 200 each coordinate Zn(2+).

It belongs to the QueC family. Homodimer. Requires Zn(2+) as cofactor.

It carries out the reaction 7-carboxy-7-deazaguanine + NH4(+) + ATP = 7-cyano-7-deazaguanine + ADP + phosphate + H2O + H(+). Its pathway is purine metabolism; 7-cyano-7-deazaguanine biosynthesis. In terms of biological role, catalyzes the ATP-dependent conversion of 7-carboxy-7-deazaguanine (CDG) to 7-cyano-7-deazaguanine (preQ(0)). The polypeptide is 7-cyano-7-deazaguanine synthase (Desulfitobacterium hafniense (strain DSM 10664 / DCB-2)).